We begin with the raw amino-acid sequence, 193 residues long: uncharacterized protein (193 aa).

Residues Thr86–Gly181 adopt a coiled-coil conformation.

This is an uncharacterized protein from Streptococcus pyogenes serotype M6 (strain ATCC BAA-946 / MGAS10394).